Reading from the N-terminus, the 208-residue chain is FMN-dependent NADH:quinone oxidoreductase 3 (208 aa).

This sequence belongs to the azoreductase type 1 family. As to quaternary structure, homodimer. FMN is required as a cofactor.

It catalyses the reaction 2 a quinone + NADH + H(+) = 2 a 1,4-benzosemiquinone + NAD(+). It carries out the reaction N,N-dimethyl-1,4-phenylenediamine + anthranilate + 2 NAD(+) = 2-(4-dimethylaminophenyl)diazenylbenzoate + 2 NADH + 2 H(+). Quinone reductase that provides resistance to thiol-specific stress caused by electrophilic quinones. Its function is as follows. Also exhibits azoreductase activity. Catalyzes the reductive cleavage of the azo bond in aromatic azo compounds to the corresponding amines. The polypeptide is FMN-dependent NADH:quinone oxidoreductase 3 (Bacillus cereus (strain ATCC 14579 / DSM 31 / CCUG 7414 / JCM 2152 / NBRC 15305 / NCIMB 9373 / NCTC 2599 / NRRL B-3711)).